A 97-amino-acid chain; its full sequence is Large ribosomal subunit protein bL28 (97 aa).

The protein belongs to the bacterial ribosomal protein bL28 family.

The polypeptide is Large ribosomal subunit protein bL28 (Bartonella henselae (strain ATCC 49882 / DSM 28221 / CCUG 30454 / Houston 1) (Rochalimaea henselae)).